We begin with the raw amino-acid sequence, 473 residues long: Photosystem II CP43 reaction center protein (473 aa).

Residues 1 to 14 constitute a propeptide that is removed on maturation; it reads MKTLYSLRRFYPVE. An N-acetylthreonine modification is found at T15. T15 is subject to Phosphothreonine. The next 5 helical transmembrane spans lie at 69 to 93, 134 to 155, 178 to 200, 255 to 275, and 291 to 312; these read LFEVAHFVPEKPMYEQGLILLPHLA, LLGPETLEESFPFFGYVWKDRN, KALYFGGVYDTWAPGGGDVRKIT, KPFAWARRALVWSGEAYLSYS, and WFNNTAYPSEFYGPTGPEASQA. A [CaMn4O5] cluster-binding site is contributed by E367. A helical transmembrane segment spans residues 447–471; the sequence is RARAAAAGFEKGIDRDFEPVLSMTP.

This sequence belongs to the PsbB/PsbC family. PsbC subfamily. In terms of assembly, PSII is composed of 1 copy each of membrane proteins PsbA, PsbB, PsbC, PsbD, PsbE, PsbF, PsbH, PsbI, PsbJ, PsbK, PsbL, PsbM, PsbT, PsbX, PsbY, PsbZ, Psb30/Ycf12, at least 3 peripheral proteins of the oxygen-evolving complex and a large number of cofactors. It forms dimeric complexes. The cofactor is Binds multiple chlorophylls and provides some of the ligands for the Ca-4Mn-5O cluster of the oxygen-evolving complex. It may also provide a ligand for a Cl- that is required for oxygen evolution. PSII binds additional chlorophylls, carotenoids and specific lipids..

The protein resides in the plastid. Its subcellular location is the chloroplast thylakoid membrane. Its function is as follows. One of the components of the core complex of photosystem II (PSII). It binds chlorophyll and helps catalyze the primary light-induced photochemical processes of PSII. PSII is a light-driven water:plastoquinone oxidoreductase, using light energy to abstract electrons from H(2)O, generating O(2) and a proton gradient subsequently used for ATP formation. This is Photosystem II CP43 reaction center protein from Helianthus annuus (Common sunflower).